The sequence spans 284 residues: Bifunctional protein FolD (284 aa).

NADP(+) contacts are provided by residues 163–165 (GAS), Ile188, and Ile229.

The protein belongs to the tetrahydrofolate dehydrogenase/cyclohydrolase family. In terms of assembly, homodimer.

The enzyme catalyses (6R)-5,10-methylene-5,6,7,8-tetrahydrofolate + NADP(+) = (6R)-5,10-methenyltetrahydrofolate + NADPH. It carries out the reaction (6R)-5,10-methenyltetrahydrofolate + H2O = (6R)-10-formyltetrahydrofolate + H(+). Its pathway is one-carbon metabolism; tetrahydrofolate interconversion. Catalyzes the oxidation of 5,10-methylenetetrahydrofolate to 5,10-methenyltetrahydrofolate and then the hydrolysis of 5,10-methenyltetrahydrofolate to 10-formyltetrahydrofolate. The polypeptide is Bifunctional protein FolD (Nautilia profundicola (strain ATCC BAA-1463 / DSM 18972 / AmH)).